We begin with the raw amino-acid sequence, 421 residues long: 3-hydroxy-3-methylglutaryl-coenzyme A reductase (421 aa).

Active-site charge relay system residues include E109, K240, and D315. The Proton donor role is filled by H410.

This sequence belongs to the HMG-CoA reductase family.

It carries out the reaction (R)-mevalonate + 2 NADP(+) + CoA = (3S)-3-hydroxy-3-methylglutaryl-CoA + 2 NADPH + 2 H(+). It functions in the pathway metabolic intermediate biosynthesis; (R)-mevalonate biosynthesis; (R)-mevalonate from acetyl-CoA: step 3/3. In terms of biological role, converts HMG-CoA to mevalonate. The chain is 3-hydroxy-3-methylglutaryl-coenzyme A reductase (hmgA) from Aeropyrum pernix (strain ATCC 700893 / DSM 11879 / JCM 9820 / NBRC 100138 / K1).